Consider the following 364-residue polypeptide: Baseplate tail-tube junction protein gp48 (364 aa).

In terms of assembly, homohexamer. The tube first annulus is composed of a gp48 hexameric ring. Interacts with gp54. Part of the baseplate macromolecular complex which consists of gp5, gp5.4, gp27 (central spike complex); gp6, gp25, gp53 (inner baseplate); gp7, gp8 (intermediate baseplate); gp9, gp10, gp11, gp12 (peripheral); gp48 and gp54 (proximal region of the tail tube).

Its subcellular location is the virion. Functionally, baseplate protein that forms, together with gp54, the baseplate-tail tube junction. The tail tube first 2 annuli are formed by gp48 and gp54, which are in continuation of the spike complex. Involved in the tail assembly. Morphogenesis of the baseplate is completed by association of gp48 and gp54, which bind the upper part of the baseplate dome to form the platform for polymerization of the tail tube. In Escherichia coli (Bacteriophage T4), this protein is Baseplate tail-tube junction protein gp48 (48).